The chain runs to 317 residues: tRNA dimethylallyltransferase (317 aa).

An ATP-binding site is contributed by 14–21; sequence GPTAVGKT. 16–21 contacts substrate; sequence TAVGKT. An interaction with substrate tRNA region spans residues 39–42; sequence DSMQ.

Belongs to the IPP transferase family. In terms of assembly, monomer. It depends on Mg(2+) as a cofactor.

It catalyses the reaction adenosine(37) in tRNA + dimethylallyl diphosphate = N(6)-dimethylallyladenosine(37) in tRNA + diphosphate. Its function is as follows. Catalyzes the transfer of a dimethylallyl group onto the adenine at position 37 in tRNAs that read codons beginning with uridine, leading to the formation of N6-(dimethylallyl)adenosine (i(6)A). This is tRNA dimethylallyltransferase from Bacillus cereus (strain AH820).